Here is a 94-residue protein sequence, read N- to C-terminus: Small ribosomal subunit protein uS19 (94 aa).

The protein belongs to the universal ribosomal protein uS19 family.

Functionally, protein S19 forms a complex with S13 that binds strongly to the 16S ribosomal RNA. The sequence is that of Small ribosomal subunit protein uS19 from Nitrosomonas eutropha (strain DSM 101675 / C91 / Nm57).